The primary structure comprises 620 residues: Long-chain fatty acid transport protein 2 (620 aa).

Residues 1–4 (MLPV) lie on the Lumenal side of the membrane. The chain crosses the membrane as a helical span at residues 5-27 (LYTGLAGLLLLPLLLTCCCPYLL). At 28–106 (QDVRFFLQLA…DHLGLRQGDC (79 aa)) the chain is on the cytoplasmic side. The helical transmembrane segment at 107–127 (VALFMGNEPAYVWLWLGLLKL) threads the bilayer. The Lumenal segment spans residues 128–267 (GCPMACLNYN…DVIYTTMPLY (140 aa)). 222–233 (YIYTSGTTGLPK) contacts AMP. Residues 268–288 (HSAALMIGLHGCIVVGATFAL) traverse the membrane as a helical segment. The Cytoplasmic segment spans residues 289–620 (RSKFSASQFW…NAIIDKTLKL (332 aa)). Residue lysine 291 is modified to N6-acetyllysine. Threonine 577 carries the phosphothreonine modification.

Belongs to the ATP-dependent AMP-binding enzyme family. As to expression, liver and kidney (at protein level).

It is found in the endoplasmic reticulum membrane. The protein localises to the peroxisome membrane. The protein resides in the cell membrane. Its subcellular location is the microsome. It catalyses the reaction a fatty acid(in) = a fatty acid(out). The enzyme catalyses (9Z)-octadecenoate(out) = (9Z)-octadecenoate(in). It carries out the reaction a long-chain fatty acid + ATP + CoA = a long-chain fatty acyl-CoA + AMP + diphosphate. The catalysed reaction is (5Z,8Z,11Z,14Z)-eicosatetraenoate + ATP + CoA = (5Z,8Z,11Z,14Z)-eicosatetraenoyl-CoA + AMP + diphosphate. It catalyses the reaction (9Z,12Z,15Z)-octadecatrienoate + ATP + CoA = (9Z,12Z,15Z)-octadecatrienoyl-CoA + AMP + diphosphate. The enzyme catalyses hexadecanoate + ATP + CoA = hexadecanoyl-CoA + AMP + diphosphate. It carries out the reaction (9Z)-octadecenoate + ATP + CoA = (9Z)-octadecenoyl-CoA + AMP + diphosphate. The catalysed reaction is 2,6,10,14-tetramethylpentadecanoate + ATP + CoA = pristanoyl-CoA + AMP + diphosphate. It catalyses the reaction (E)-hexadec-2-enoate + ATP + CoA = (2E)-hexadecenoyl-CoA + AMP + diphosphate. The enzyme catalyses 3,7,11,15-tetramethylhexadecanoate + ATP + CoA = phytanoyl-CoA + AMP + diphosphate. It carries out the reaction a very long-chain fatty acid + ATP + CoA = a very long-chain fatty acyl-CoA + AMP + diphosphate. The catalysed reaction is tetracosanoate + ATP + CoA = tetracosanoyl-CoA + AMP + diphosphate. It catalyses the reaction (4Z,7Z,10Z,13Z,16Z,19Z)-docosahexaenoate + ATP + CoA = (4Z,7Z,10Z,13Z,16Z,19Z)-docosahexaenoyl-CoA + AMP + diphosphate. The enzyme catalyses (25R)-3alpha,7alpha,12alpha-trihydroxy-5beta-cholestan-26-oate + ATP + CoA = (25R)-3alpha,7alpha,12alpha-trihydroxy-5beta-cholestan-26-oyl-CoA + AMP + diphosphate. In terms of biological role, mediates the import of long-chain fatty acids (LCFA) into the cell by facilitating their transport across cell membranes, playing an important role in hepatic fatty acid uptake. Also functions as an acyl-CoA ligase catalyzing the ATP-dependent formation of fatty acyl-CoA using LCFA and very-long-chain fatty acids (VLCFA) as substrates, which prevents fatty acid efflux from cells and might drive more fatty acid uptake. Plays a pivotal role in regulating available LCFA substrates from exogenous sources in tissues undergoing high levels of beta-oxidation or triglyceride synthesis. Can also activate branched-chain fatty acids such as phytanic acid and pristanic acid. May contribute to the synthesis of sphingosine-1-phosphate. Does not activate C24 bile acids, cholate and chenodeoxycholate. In vitro, activates 3-alpha,7-alpha,12-alpha-trihydroxy-5-beta-cholestanate (THCA), the C27 precursor of cholic acid deriving from the de novo synthesis from cholesterol. However, it is not critical for THCA activation and bile synthesis in vivo. This Rattus norvegicus (Rat) protein is Long-chain fatty acid transport protein 2 (Slc27a2).